The chain runs to 443 residues: Adenylyltransferase and sulfurtransferase UBA4 (443 aa).

Residues Gly81, Asp102, 109–113, Lys126, and 170–171 each bind ATP; these read SNLHR and DS. 2 residues coordinate Zn(2+): Cys212 and Cys215. Cys229 (glycyl thioester intermediate; for adenylyltransferase activity) is an active-site residue. Residues Cys290 and Cys293 each coordinate Zn(2+). The Rhodanese domain occupies 342-441; that stretch reads KERGFVCLDV…YIDEINPSLP (100 aa). Residue Cys400 is the Cysteine persulfide intermediate; for sulfurtransferase activity of the active site.

It in the N-terminal section; belongs to the HesA/MoeB/ThiF family. UBA4 subfamily. It depends on Zn(2+) as a cofactor.

The protein resides in the cytoplasm. Its subcellular location is the cytosol. It participates in tRNA modification; 5-methoxycarbonylmethyl-2-thiouridine-tRNA biosynthesis. In terms of biological role, plays a central role in 2-thiolation of mcm(5)S(2)U at tRNA wobble positions of cytosolic tRNA(Lys), tRNA(Glu) and tRNA(Gln). Acts by mediating the C-terminal thiocarboxylation of sulfur carrier URM1. Its N-terminus first activates URM1 as acyl-adenylate (-COAMP), then the persulfide sulfur on the catalytic cysteine is transferred to URM1 to form thiocarboxylation (-COSH) of its C-terminus. The reaction probably involves hydrogen sulfide that is generated from the persulfide intermediate and that acts as a nucleophile towards URM1. Subsequently, a transient disulfide bond is formed. Does not use thiosulfate as sulfur donor; NFS1 probably acting as a sulfur donor for thiocarboxylation reactions. Prior mcm(5) tRNA modification by the elongator complex is required for 2-thiolation. May also be involved in protein urmylation. The protein is Adenylyltransferase and sulfurtransferase UBA4 of Eremothecium gossypii (strain ATCC 10895 / CBS 109.51 / FGSC 9923 / NRRL Y-1056) (Yeast).